We begin with the raw amino-acid sequence, 251 residues long: Glutamate 5-kinase (251 aa).

Residue Lys-7 participates in ATP binding. Ser-45, Asp-130, and Asn-142 together coordinate substrate. Residues 162–163 and 204–210 each bind ATP; these read SD and TGGIVTK.

It belongs to the glutamate 5-kinase family.

It localises to the cytoplasm. The catalysed reaction is L-glutamate + ATP = L-glutamyl 5-phosphate + ADP. It functions in the pathway amino-acid biosynthesis; L-proline biosynthesis; L-glutamate 5-semialdehyde from L-glutamate: step 1/2. Its function is as follows. Catalyzes the transfer of a phosphate group to glutamate to form L-glutamate 5-phosphate. This chain is Glutamate 5-kinase, found in Campylobacter jejuni subsp. jejuni serotype O:6 (strain 81116 / NCTC 11828).